Consider the following 293-residue polypeptide: Ribosomal protein L11 methyltransferase (293 aa).

S-adenosyl-L-methionine contacts are provided by Thr145, Gly166, Asp188, and Asn229.

Belongs to the methyltransferase superfamily. PrmA family.

It is found in the cytoplasm. The catalysed reaction is L-lysyl-[protein] + 3 S-adenosyl-L-methionine = N(6),N(6),N(6)-trimethyl-L-lysyl-[protein] + 3 S-adenosyl-L-homocysteine + 3 H(+). Methylates ribosomal protein L11. The sequence is that of Ribosomal protein L11 methyltransferase from Idiomarina loihiensis (strain ATCC BAA-735 / DSM 15497 / L2-TR).